The following is a 56-amino-acid chain: UPF0434 protein ECH_0194 (56 aa).

This sequence belongs to the UPF0434 family.

The chain is UPF0434 protein ECH_0194 from Ehrlichia chaffeensis (strain ATCC CRL-10679 / Arkansas).